Here is a 211-residue protein sequence, read N- to C-terminus: Large ribosomal subunit protein uL4 (211 aa).

The disordered stretch occupies residues 48-89 (KRAGTASTKTRVEVRGGGAKPWRQKGTGRARAGSRTSPLWRG).

Belongs to the universal ribosomal protein uL4 family. Part of the 50S ribosomal subunit.

Its function is as follows. One of the primary rRNA binding proteins, this protein initially binds near the 5'-end of the 23S rRNA. It is important during the early stages of 50S assembly. It makes multiple contacts with different domains of the 23S rRNA in the assembled 50S subunit and ribosome. Forms part of the polypeptide exit tunnel. The polypeptide is Large ribosomal subunit protein uL4 (Desulfotalea psychrophila (strain LSv54 / DSM 12343)).